Reading from the N-terminus, the 312-residue chain is Acetyl-coenzyme A carboxylase carboxyl transferase subunit alpha (312 aa).

The region spanning 25 to 286 (GDDSAVEILK…GNYIIEKLNE (262 aa)) is the CoA carboxyltransferase C-terminal domain.

It belongs to the AccA family. Acetyl-CoA carboxylase is a heterohexamer composed of biotin carboxyl carrier protein (AccB), biotin carboxylase (AccC) and two subunits each of ACCase subunit alpha (AccA) and ACCase subunit beta (AccD).

Its subcellular location is the cytoplasm. The catalysed reaction is N(6)-carboxybiotinyl-L-lysyl-[protein] + acetyl-CoA = N(6)-biotinyl-L-lysyl-[protein] + malonyl-CoA. Its pathway is lipid metabolism; malonyl-CoA biosynthesis; malonyl-CoA from acetyl-CoA: step 1/1. Its function is as follows. Component of the acetyl coenzyme A carboxylase (ACC) complex. First, biotin carboxylase catalyzes the carboxylation of biotin on its carrier protein (BCCP) and then the CO(2) group is transferred by the carboxyltransferase to acetyl-CoA to form malonyl-CoA. The chain is Acetyl-coenzyme A carboxylase carboxyl transferase subunit alpha from Campylobacter hominis (strain ATCC BAA-381 / DSM 21671 / CCUG 45161 / LMG 19568 / NCTC 13146 / CH001A).